Reading from the N-terminus, the 184-residue chain is MNWRSERIWIELITGSRKTSNFFWACILFLGSLGFLLVGTSSYLGRNLISLFPSQQILFFPQGIVMSFYGIAGLFISSYLWCTIWWNVGSGYDQFDRKEGIVCIFRWGFPGRNRRIFLRFLMRDIQSIRIEVKEGLYPRRVLYMEIRGQGALPLTRIDENLTPREIEQKAAELAYFLRVPIEVF.

The next 2 helical transmembrane spans lie at 22-42 (FFWA…GTSS) and 57-77 (ILFF…LFIS).

Belongs to the Ycf4 family.

It is found in the plastid. Its subcellular location is the chloroplast thylakoid membrane. Functionally, seems to be required for the assembly of the photosystem I complex. The polypeptide is Photosystem I assembly protein Ycf4 (Nandina domestica (Heavenly bamboo)).